Consider the following 227-residue polypeptide: PKHD-type hydroxylase PHZ_c0292 (227 aa).

Positions 78 to 178 (VVFPPLFNRY…RVCSFFWIQS (101 aa)) constitute a Fe2OG dioxygenase domain. Residues histidine 96, aspartate 98, and histidine 159 each contribute to the Fe cation site. Arginine 169 lines the 2-oxoglutarate pocket.

Fe(2+) is required as a cofactor. Requires L-ascorbate as cofactor.

This chain is PKHD-type hydroxylase PHZ_c0292, found in Phenylobacterium zucineum (strain HLK1).